A 291-amino-acid chain; its full sequence is Trimeric intracellular cation channel type B (291 aa).

Topologically, residues 1–19 (MDSPWDELALAFSRTSMFP) are lumenal. Residues 20 to 33 (FFDIAHYLVSVMAV) form a helical membrane-spanning segment. Topologically, residues 34 to 50 (KRQPGAAALAWKNPISS) are cytoplasmic. The chain crosses the membrane as a helical span at residues 51 to 70 (WFTAMLHCFGGGILSCLLLA). Topologically, residues 71-82 (EPPLKFLANHTN) are lumenal. Residues 83 to 99 (ILLASSIWYITFFCPHD) form a helical membrane-spanning segment. Residues 100-104 (LVSQG) are Cytoplasmic-facing. A helical transmembrane segment spans residues 105-121 (YSYLPVQLLASGMKEVT). 2 residues coordinate a 1,2-diacyl-sn-glycero-3-phospho-(1D-myo-inositol-4,5-bisphosphate): Lys-118 and Arg-122. Residues 122-139 (RTWKIVGGVTHANSYYKN) are Lumenal-facing. The helical transmembrane segment at 140-156 (GWIVMIAIGWARGAGGT) threads the bilayer. The Cytoplasmic portion of the chain corresponds to 157–179 (IITNFERLVKGDWKPEGDEWLKM). A helical transmembrane segment spans residues 180–195 (SYPAKVTLLGSVIFTF). Topologically, residues 196–207 (QHTQHLAISKHN) are lumenal. A helical transmembrane segment spans residues 208-227 (LMFLYTIFIVATKITMMTTQ). At 228-291 (TSTMTFAPFE…VKKKHTKKNE (64 aa)) the chain is on the cytoplasmic side. The segment at 256–291 (KKSEAKSPSNGVGSLASKPVDVASDNVKKKHTKKNE) is disordered. Ser-262 bears the Phosphoserine mark.

The protein belongs to the TMEM38 family. As to quaternary structure, homotrimer; conformation seems to be controled by binding to diacylglycerol (DAG).

The protein localises to the endoplasmic reticulum membrane. It carries out the reaction K(+)(in) = K(+)(out). Its activity is regulated as follows. Channel activity is activated by increased cytosolic Ca(2+) levels and blocked by luminal high Ca(2+) levels. In terms of biological role, intracellular monovalent cation channel required for maintenance of rapid intracellular calcium release. Acts as a potassium counter-ion channel that functions in synchronization with calcium release from intracellular stores. Activated by increased cytosolic Ca(2+) levels. In Homo sapiens (Human), this protein is Trimeric intracellular cation channel type B.